A 302-amino-acid polypeptide reads, in one-letter code: Homoserine O-acetyltransferase (302 aa).

C142 functions as the Acyl-thioester intermediate in the catalytic mechanism. K163 and S192 together coordinate substrate. Residue H235 is the Proton acceptor of the active site. E237 is an active-site residue. Substrate is bound at residue R249.

Belongs to the MetA family.

Its subcellular location is the cytoplasm. It carries out the reaction L-homoserine + acetyl-CoA = O-acetyl-L-homoserine + CoA. The protein operates within amino-acid biosynthesis; L-methionine biosynthesis via de novo pathway; O-acetyl-L-homoserine from L-homoserine: step 1/1. In terms of biological role, transfers an acetyl group from acetyl-CoA to L-homoserine, forming acetyl-L-homoserine. The protein is Homoserine O-acetyltransferase of Geobacillus sp. (strain WCH70).